The chain runs to 108 residues: Monothiol bacilliredoxin BrxC (108 aa).

Residue cysteine 31 is modified to S-bacillithiol cysteine disulfide.

In terms of assembly, interacts with AbrB, BdhA, Bdr, BrxB, FolD, GapA, GapB, GatA, PfkA, PyrAA, PyrAB, PyrE, PyrG, PyrH, RpsB, RpsK, RpsL, SalA, SucC, Tuf and YtsJ. In terms of processing, cys can react with bacillithiol (BSH) to form mixed disulfides. S-bacillithiolation protects Cys residues against overoxidation by acting as a redox switch in response to oxidative stress.

Its function is as follows. S-bacillithiolation is the formation of mixed disulfide bonds between protein thiols and the general thiol reductant bacillithiol (BSH) under oxidative stress. BSH is an equivalent of glutathione (GSH) in Firmicutes. This protein is a monothiol bacilliredoxin, which debacillithiolates (removes BSH) the S-bacillithiolated glyceraldehyde-3-phosphate dehydrogenases (GAPDHs) GapA and GapB in vivo and probably a number of other oxidized cytosolic proteins. Debacillithiolates the S-bacillithiolated Bdr (Bdr-SSB) and BrxB (BrxB-SSB) in vitro. Involved in maintaining redox homeostasis in response to disulfide stress conditions. This is Monothiol bacilliredoxin BrxC from Bacillus subtilis (strain 168).